The primary structure comprises 259 residues: UPF0246 protein SG0407 (259 aa).

Belongs to the UPF0246 family.

The chain is UPF0246 protein SG0407 from Sodalis glossinidius (strain morsitans).